The sequence spans 407 residues: Imidazolonepropionase (407 aa).

2 residues coordinate Fe(3+): histidine 74 and histidine 76. Zn(2+)-binding residues include histidine 74 and histidine 76. 4-imidazolone-5-propanoate is bound by residues arginine 83, tyrosine 146, and histidine 179. Tyrosine 146 contributes to the N-formimidoyl-L-glutamate binding site. Residue histidine 244 participates in Fe(3+) binding. Histidine 244 is a binding site for Zn(2+). Position 247 (glutamine 247) interacts with 4-imidazolone-5-propanoate. Aspartate 319 is a binding site for Fe(3+). Aspartate 319 provides a ligand contact to Zn(2+). N-formimidoyl-L-glutamate contacts are provided by asparagine 321 and glycine 323. Threonine 324 contributes to the 4-imidazolone-5-propanoate binding site.

The protein belongs to the metallo-dependent hydrolases superfamily. HutI family. Zn(2+) serves as cofactor. Fe(3+) is required as a cofactor.

Its subcellular location is the cytoplasm. The enzyme catalyses 4-imidazolone-5-propanoate + H2O = N-formimidoyl-L-glutamate. The protein operates within amino-acid degradation; L-histidine degradation into L-glutamate; N-formimidoyl-L-glutamate from L-histidine: step 3/3. Its function is as follows. Catalyzes the hydrolytic cleavage of the carbon-nitrogen bond in imidazolone-5-propanoate to yield N-formimidoyl-L-glutamate. It is the third step in the universal histidine degradation pathway. The protein is Imidazolonepropionase of Salmonella arizonae (strain ATCC BAA-731 / CDC346-86 / RSK2980).